The chain runs to 187 residues: Elongation factor P (187 aa).

The protein belongs to the elongation factor P family.

It is found in the cytoplasm. It participates in protein biosynthesis; polypeptide chain elongation. Its function is as follows. Involved in peptide bond synthesis. Stimulates efficient translation and peptide-bond synthesis on native or reconstituted 70S ribosomes in vitro. Probably functions indirectly by altering the affinity of the ribosome for aminoacyl-tRNA, thus increasing their reactivity as acceptors for peptidyl transferase. The chain is Elongation factor P from Prochlorococcus marinus (strain NATL1A).